The sequence spans 400 residues: ATP-dependent RNA helicase Ddx1 (400 aa).

Residues 1–60 enclose the Helicase ATP-binding domain; the sequence is DDEADRLLKQGYTDLIERLHKQIPKITSDGCRLQMIVCSATLHAFEVKKMAERLMHFPTW. The short motif at 2 to 5 is the DEAD box element; sequence DEAD. The region spanning 115–316 is the Helicase C-terminal domain; sequence TFSQAVKLLK…QVVKSLDVPV (202 aa).

This sequence belongs to the DEAD box helicase family. DDX1 subfamily.

The catalysed reaction is ATP + H2O = ADP + phosphate + H(+). Its function is as follows. Acts as an ATP-dependent RNA helicase, able to unwind both RNA-RNA and RNA-DNA duplexes. Possesses 5' single-stranded RNA overhang nuclease activity. This is ATP-dependent RNA helicase Ddx1 (Ddx1) from Drosophila virilis (Fruit fly).